Reading from the N-terminus, the 339-residue chain is Glycerol-3-phosphate dehydrogenase [NAD(P)+] (339 aa).

NADPH contacts are provided by Ser-15, Trp-16, His-36, and Lys-110. Sn-glycerol 3-phosphate contacts are provided by Lys-110, Gly-144, and Ser-146. Ala-148 serves as a coordination point for NADPH. Sn-glycerol 3-phosphate is bound by residues Lys-199, Asp-252, Ser-262, Arg-263, and Asn-264. Lys-199 functions as the Proton acceptor in the catalytic mechanism. An NADPH-binding site is contributed by Arg-263. NADPH contacts are provided by Val-287 and Glu-289.

Belongs to the NAD-dependent glycerol-3-phosphate dehydrogenase family.

Its subcellular location is the cytoplasm. The enzyme catalyses sn-glycerol 3-phosphate + NAD(+) = dihydroxyacetone phosphate + NADH + H(+). It catalyses the reaction sn-glycerol 3-phosphate + NADP(+) = dihydroxyacetone phosphate + NADPH + H(+). Its pathway is membrane lipid metabolism; glycerophospholipid metabolism. Catalyzes the reduction of the glycolytic intermediate dihydroxyacetone phosphate (DHAP) to sn-glycerol 3-phosphate (G3P), the key precursor for phospholipid synthesis. This chain is Glycerol-3-phosphate dehydrogenase [NAD(P)+], found in Desulfotalea psychrophila (strain LSv54 / DSM 12343).